The chain runs to 285 residues: MAHFFKENSSCYFCFRYLENPVYLNCGYICCFQCLDSLEKSPEGDGVLCPNCSVVSLKEDIRHAKQLRNLVTTVKDLEPQLNFILTMDPSMKIFQVNMILDVDTAQNNLIISEDLRSVYHTSQTQDRKKCAERFDPSPCVLGSSRFTSGCHYWEVVVGTSKEWDIGICKESINRQEVVYLSEKKGFWTVGVRNEEVYAASTDPLTVLLVNPRLHRVGIFLDLLEKSVSFWDLGDGSHIYTFLEIPDTEPFRPFFSPANTYPDEEQVISICPVMNPSIFGLPVNPV.

The RING-type; degenerate zinc finger occupies 11-53; it reads CYFCFRYLENPVYLNCGYICCFQCLDSLEKSPEGDGVLCPNCS. The 199-residue stretch at 78–276 folds into the B30.2/SPRY domain; that stretch reads EPQLNFILTM…ISICPVMNPS (199 aa).

Interacts with PSMB1, UBE2A and CCNB1.

It localises to the cytoplasm. The protein resides in the nucleus. This Rattus norvegicus (Rat) protein is Ret finger protein-like 4A (Rfpl4a).